We begin with the raw amino-acid sequence, 365 residues long: GTPase Obg (365 aa).

The Obg domain occupies 1–159; the sequence is MKFIDEARIE…RMLKLELKVL (159 aa). An OBG-type G domain is found at 160-334; it reads ADVGLLGMPN…LIYAIKDHLQ (175 aa). Residues 166–173, 191–195, 213–216, 284–287, and 315–317 contribute to the GTP site; these read GMPNAGKS, FTTLH, DIPG, NKLD, and SAL. 2 residues coordinate Mg(2+): Ser173 and Thr193.

This sequence belongs to the TRAFAC class OBG-HflX-like GTPase superfamily. OBG GTPase family. As to quaternary structure, monomer. Mg(2+) serves as cofactor.

Its subcellular location is the cytoplasm. Functionally, an essential GTPase which binds GTP, GDP and possibly (p)ppGpp with moderate affinity, with high nucleotide exchange rates and a fairly low GTP hydrolysis rate. Plays a role in control of the cell cycle, stress response, ribosome biogenesis and in those bacteria that undergo differentiation, in morphogenesis control. The protein is GTPase Obg of Cupriavidus necator (strain ATCC 17699 / DSM 428 / KCTC 22496 / NCIMB 10442 / H16 / Stanier 337) (Ralstonia eutropha).